The primary structure comprises 198 residues: Imidazoleglycerol-phosphate dehydratase (198 aa).

Belongs to the imidazoleglycerol-phosphate dehydratase family.

Its subcellular location is the cytoplasm. The catalysed reaction is D-erythro-1-(imidazol-4-yl)glycerol 3-phosphate = 3-(imidazol-4-yl)-2-oxopropyl phosphate + H2O. It functions in the pathway amino-acid biosynthesis; L-histidine biosynthesis; L-histidine from 5-phospho-alpha-D-ribose 1-diphosphate: step 6/9. This Gluconacetobacter diazotrophicus (strain ATCC 49037 / DSM 5601 / CCUG 37298 / CIP 103539 / LMG 7603 / PAl5) protein is Imidazoleglycerol-phosphate dehydratase.